The following is an 804-amino-acid chain: Zinc finger protein YGR067C (804 aa).

2 C2H2-type zinc fingers span residues 8 to 30 (YICSFCLKPFSRSEHKIRHERSH) and 36 to 59 (FQCQVCKHSFVRRDLLQRHIRTVH). Polar residues predominate over residues 782–796 (QEFSASSTDNKQSKN). The segment at 782–804 (QEFSASSTDNKQSKNIEIFSQIK) is disordered.

It is found in the nucleus. The polypeptide is Zinc finger protein YGR067C (Saccharomyces cerevisiae (strain ATCC 204508 / S288c) (Baker's yeast)).